Here is a 476-residue protein sequence, read N- to C-terminus: ATP synthase subunit beta (476 aa).

154–161 (GGAGVGKT) is an ATP binding site.

The protein belongs to the ATPase alpha/beta chains family. As to quaternary structure, F-type ATPases have 2 components, CF(1) - the catalytic core - and CF(0) - the membrane proton channel. CF(1) has five subunits: alpha(3), beta(3), gamma(1), delta(1), epsilon(1). CF(0) has three main subunits: a(1), b(2) and c(9-12). The alpha and beta chains form an alternating ring which encloses part of the gamma chain. CF(1) is attached to CF(0) by a central stalk formed by the gamma and epsilon chains, while a peripheral stalk is formed by the delta and b chains.

It localises to the cell inner membrane. The catalysed reaction is ATP + H2O + 4 H(+)(in) = ADP + phosphate + 5 H(+)(out). Its function is as follows. Produces ATP from ADP in the presence of a proton gradient across the membrane. The catalytic sites are hosted primarily by the beta subunits. The protein is ATP synthase subunit beta of Nitrobacter hamburgensis (strain DSM 10229 / NCIMB 13809 / X14).